We begin with the raw amino-acid sequence, 339 residues long: MASSAVDQPEGVDETILTLRKVLVNESEPLARRFRALFSLKYIACLQPPTEKTLPAIQAIAAGFTSSSALLKHELAYCLGQTRNPDAVSYLLEVVKNTEQDAMCRHEAAEGLGALGFDTSLDVLKALRDDEKEEDVIRETCDIAVDRILWENSEERKSEKLKPSDFTSIDPAPPLPMASSQPSISDLEKTLLDTKLPLFQRYRAMFALRDLASPPDLPTAVEAVEALAKGLKDPSALFRHEVAFVFGQLCHPASVPSLTETLSDQKEMGMVRHEAAEALGSLGDVEGVEDTLKKFLNDPEQVVRDSIIVALDMAEYEKNGEMEYALVPDSAAPAAVSAA.

HEAT-like PBS-type repeat units follow at residues L71 to N97 and C104 to D130. Fe cation contacts are provided by H73, E74, H106, and E107. A disordered region spans residues E159–S183. HEAT-like PBS-type repeat units follow at residues Q200–D233, F238–D264, and V271–D298. Residues H240, E241, H273, and E274 each contribute to the Fe cation site.

Belongs to the deoxyhypusine hydroxylase family. Requires Fe(2+) as cofactor.

It localises to the cytoplasm. It is found in the nucleus. It carries out the reaction [eIF5A protein]-deoxyhypusine + AH2 + O2 = [eIF5A protein]-hypusine + A + H2O. It participates in protein modification; eIF5A hypusination. In terms of biological role, catalyzes the hydroxylation of the N(6)-(4-aminobutyl)-L-lysine intermediate to form hypusine, an essential post-translational modification only found in mature eIF-5A factor. This Aspergillus oryzae (strain ATCC 42149 / RIB 40) (Yellow koji mold) protein is Deoxyhypusine hydroxylase (lia1).